The following is a 1487-amino-acid chain: Collagen alpha-1(II) chain (1487 aa).

A signal peptide spans M1–G25. Residues Q26 to A181 constitute a propeptide, N-terminal propeptide. The 58-residue stretch at G32–P89 folds into the VWFC domain. Positions S96 to F179 are disordered. Basic and acidic residues-rich tracts occupy residues Q104 to I115 and P132 to E153. A compositionally biased stretch (pro residues) spans P157 to P172. K190 is subject to 5-hydroxylysine. K190 carries O-linked (Gal...) hydroxylysine glycosylation. Residues A191–Q1237 are disordered. Residues G192–M203 are compositionally biased toward low complexity. The triple-helical region stretch occupies residues G201–P1214. The span at P208–A217 shows a compositional bias: pro residues. Over residues P218–M239 the composition is skewed to low complexity. Residues P251–E265 are compositionally biased toward basic and acidic residues. Residues K287, K299, and K308 each carry the 5-hydroxylysine modification. K287, K299, and K308 each carry an O-linked (Gal...) hydroxylysine glycan. Composition is skewed to low complexity over residues E310 to P320 and T335 to P350. A compositionally biased stretch (gly residues) spans G360–G369. 2 stretches are compositionally biased toward low complexity: residues A370 to A382 and P403 to P431. Position 374 is a 5-hydroxylysine (K374). Residue K374 is glycosylated (O-linked (Gal...) hydroxylysine). The segment covering F433–P442 has biased composition (pro residues). Residues E472 to A485 are compositionally biased toward low complexity. 5-hydroxylysine occurs at positions 608 and 620. 2 O-linked (Gal...) hydroxylysine glycosylation sites follow: K608 and K620. Residues L622–L631 show a composition bias toward low complexity. Residues P659 and P668 each carry the 4-hydroxyproline modification. P670 carries the post-translational modification 3-hydroxyproline. A 4-hydroxyproline mark is found at P671 and P674. Residues E706 to P736 are compositionally biased toward low complexity. Over residues K764–P775 the composition is skewed to basic and acidic residues. Composition is skewed to low complexity over residues A833–K848 and P877–P914. A 3-hydroxyproline modification is found at P907. 3 positions are modified to 4-hydroxyproline: P908, P914, and P920. Residues D962–R980 are compositionally biased toward low complexity. The segment covering A1069 to A1079 has biased composition (pro residues). Positions R1115–L1129 are enriched in basic and acidic residues. P1144 is subject to 3-hydroxyproline. Composition is skewed to low complexity over residues S1148–A1157 and P1171–P1181. Residue P1181 is modified to 4-hydroxyproline. Position 1186 is a 3-hydroxyproline (P1186). Residue P1187 is modified to 4-hydroxyproline. A compositionally biased stretch (pro residues) spans V1199 to P1216. The residue at position 1201 (P1201) is a 3-hydroxyproline. P1202 and P1205 each carry 4-hydroxyproline. The residue at position 1207 (P1207) is a 3-hydroxyproline. 4-hydroxyproline is present on residues P1208 and P1211. P1213 carries the post-translational modification 3-hydroxyproline. P1214 is subject to 4-hydroxyproline. Residues G1215–A1241 form a nonhelical region (C-terminal) region. One can recognise a Fibrillar collagen NC1 domain in the interval V1253–L1487. 3 disulfides stabilise this stretch: C1283–C1315, C1323–C1485, and C1393–C1438. The Ca(2+) site is built by D1301, N1303, Q1304, C1306, and D1309.

The protein belongs to the fibrillar collagen family. In terms of assembly, homotrimers of alpha 1(II) chains. Contains mostly 4-hydroxyproline. Prolines at the third position of the tripeptide repeating unit (G-X-P) are 4-hydroxylated in some or all of the chains. Post-translationally, contains 3-hydroxyproline at a few sites. This modification occurs on the first proline residue in the sequence motif Gly-Pro-Hyp, where Hyp is 4-hydroxyproline. In terms of processing, lysine residues at the third position of the tripeptide repeating unit (G-X-Y) are 5-hydroxylated in some or all of the chains. O-glycosylated on hydroxylated lysine residues. The O-linked glycan consists of a Glc-Gal disaccharide.

The protein localises to the secreted. The protein resides in the extracellular space. Its subcellular location is the extracellular matrix. Its function is as follows. Type II collagen is specific for cartilaginous tissues. It is essential for the normal embryonic development of the skeleton, for linear growth and for the ability of cartilage to resist compressive forces. This chain is Collagen alpha-1(II) chain, found in Mus musculus (Mouse).